Consider the following 333-residue polypeptide: DNA-directed RNA polymerase subunit alpha (333 aa).

The tract at residues 1-246 is alpha N-terminal domain (alpha-NTD); that stretch reads MEKFIKINWT…AHLNIIGDVN (246 aa). The segment at 263–333 is alpha C-terminal domain (alpha-CTD); it reads HSKTQNILIQ…YNVFLDKGEE (71 aa).

The protein belongs to the RNA polymerase alpha chain family. Homodimer. The RNAP catalytic core consists of 2 alpha, 1 beta, 1 beta' and 1 omega subunit. When a sigma factor is associated with the core the holoenzyme is formed, which can initiate transcription.

The enzyme catalyses RNA(n) + a ribonucleoside 5'-triphosphate = RNA(n+1) + diphosphate. DNA-dependent RNA polymerase catalyzes the transcription of DNA into RNA using the four ribonucleoside triphosphates as substrates. The polypeptide is DNA-directed RNA polymerase subunit alpha (Mycoplasma mobile (strain ATCC 43663 / 163K / NCTC 11711) (Mesomycoplasma mobile)).